A 21-amino-acid chain; its full sequence is Peptide PGLa-B2 (21 aa).

At leucine 21 the chain carries Leucine amide.

As to expression, expressed by the skin glands.

The protein localises to the secreted. Its function is as follows. Has antimicrobial activity against Gram-negative bacterium E.coli ATCC 25922 (MIC=25 uM), Gram-positive bacterium S.auerus ATCC 25923 (MIC=50 uM) and against fungus C.albicans ATCC 90028 (MIC=25 uM). Has some hemolytic activity against human erythrocytes at high concentration. The polypeptide is Peptide PGLa-B2 (Xenopus borealis (Kenyan clawed frog)).